The primary structure comprises 169 residues: Thaumatin-like pathogenesis-related protein 4 (169 aa).

The N-terminal stretch at 1–21 is a signal peptide; the sequence is MATSSTVLFLLLAVFAASASA.

The protein belongs to the thaumatin family.

In terms of biological role, associated with resistance against stem rust fungi. The sequence is that of Thaumatin-like pathogenesis-related protein 4 (RASTL-4) from Avena sativa (Oat).